Here is an 85-residue protein sequence, read N- to C-terminus: uncharacterized protein (85 aa).

This is an uncharacterized protein from Fowlpox virus (strain NVSL) (FPV).